A 413-amino-acid polypeptide reads, in one-letter code: Multifunctional CCA protein (413 aa).

ATP-binding residues include Gly-8 and Arg-11. CTP-binding residues include Gly-8 and Arg-11. Positions 21 and 23 each coordinate Mg(2+). ATP contacts are provided by Arg-91, Arg-137, and Arg-140. Residues Arg-91, Arg-137, and Arg-140 each coordinate CTP. An HD domain is found at 228–329; it reads TGKHTLLSLK…VSLFDKGDFW (102 aa).

This sequence belongs to the tRNA nucleotidyltransferase/poly(A) polymerase family. Bacterial CCA-adding enzyme type 1 subfamily. In terms of assembly, monomer. Can also form homodimers and oligomers. It depends on Mg(2+) as a cofactor. The cofactor is Ni(2+).

The catalysed reaction is a tRNA precursor + 2 CTP + ATP = a tRNA with a 3' CCA end + 3 diphosphate. It carries out the reaction a tRNA with a 3' CCA end + 2 CTP + ATP = a tRNA with a 3' CCACCA end + 3 diphosphate. Its function is as follows. Catalyzes the addition and repair of the essential 3'-terminal CCA sequence in tRNAs without using a nucleic acid template. Adds these three nucleotides in the order of C, C, and A to the tRNA nucleotide-73, using CTP and ATP as substrates and producing inorganic pyrophosphate. tRNA 3'-terminal CCA addition is required both for tRNA processing and repair. Also involved in tRNA surveillance by mediating tandem CCA addition to generate a CCACCA at the 3' terminus of unstable tRNAs. While stable tRNAs receive only 3'-terminal CCA, unstable tRNAs are marked with CCACCA and rapidly degraded. This Shewanella denitrificans (strain OS217 / ATCC BAA-1090 / DSM 15013) protein is Multifunctional CCA protein.